Reading from the N-terminus, the 112-residue chain is Large ribosomal subunit protein eL33w (112 aa).

Belongs to the eukaryotic ribosomal protein eL33 family.

The polypeptide is Large ribosomal subunit protein eL33w (RPL35AA) (Arabidopsis thaliana (Mouse-ear cress)).